Consider the following 246-residue polypeptide: Octanoyltransferase (246 aa).

In terms of domain architecture, BPL/LPL catalytic spans 30–227 (GRIGNTLLLL…QFGRVFGHQV (198 aa)). Substrate contacts are provided by residues 75 to 82 (RGGDVTYH), 155 to 157 (AIG), and 168 to 170 (GFA). Catalysis depends on C186, which acts as the Acyl-thioester intermediate.

It belongs to the LipB family.

It is found in the cytoplasm. It carries out the reaction octanoyl-[ACP] + L-lysyl-[protein] = N(6)-octanoyl-L-lysyl-[protein] + holo-[ACP] + H(+). It functions in the pathway protein modification; protein lipoylation via endogenous pathway; protein N(6)-(lipoyl)lysine from octanoyl-[acyl-carrier-protein]: step 1/2. Catalyzes the transfer of endogenously produced octanoic acid from octanoyl-acyl-carrier-protein onto the lipoyl domains of lipoate-dependent enzymes. Lipoyl-ACP can also act as a substrate although octanoyl-ACP is likely to be the physiological substrate. In Acidobacterium capsulatum (strain ATCC 51196 / DSM 11244 / BCRC 80197 / JCM 7670 / NBRC 15755 / NCIMB 13165 / 161), this protein is Octanoyltransferase.